A 648-amino-acid polypeptide reads, in one-letter code: MADNTGTDNKGTGCSGWFLVEAIVDRKTGEEISDDEDETVEDSGLDMVDFIDDRCITHNSLEAQALLNEQEADAHYAAVQDLKRKYLGSPYVSPLGHIEQSVECDISPRLNAIQLSRKPKKVKRRLFQSREITDSGYGHTEVEVEAATQVERHGEPENGCGGGGHGRDKEGEGQVHTEVHTESEIEHHTGTTRVLELLKCKDIRATLHGKFKQCYGLSFTDLIRQFKSNKTTCEDWVVAAFGVHHSVSEAFEKLIQPLTIYRHIQWLTNEWGMLLLVLLRFKVNKNRCTVARTLATLLNIPEDHMLIEPPKIQSSVAALYWFRTSLSNASIVTGETPEWIARQTIVEHGLADSQFKLTEMVQWAYDNDYCDECDIAFEYAKRADFDSNAKAFLNSNCQAKYVKDCATMCKHYKNAEMKKMTMNQWIKHRSKKIDETGNWKPIVQFLRHQNIEFISFLSKLKLWLQGTPKKNCIAIVGPPDTGKSMFCMSLIKFLGGTVISYVNSSSHFWLQPLCNTKVALLDDATHSCWGYMDTYMRNLLDGNPMSIDRKHKSLALIKCPPLLVTSNIDITTEEKYKYLYSRVTVFKFPNPFPFDRNGNAVYELCDANWKCFFARLSASLDIQDSEDEDDGDTSQAFRCVPGTVVRTV.

The short motif at 83–85 (KRK) is the Nuclear localization signal element. A phosphoserine; by host mark is found at Ser89, Ser93, and Ser107. A Nuclear export signal motif is present at residues 106–115 (ISPRLNAIQL). The tract at residues 153–188 (HGEPENGCGGGGHGRDKEGEGQVHTEVHTESEIEHH) is disordered. Positions 165–188 (HGRDKEGEGQVHTEVHTESEIEHH) are enriched in basic and acidic residues. Positions 186 to 352 (EHHTGTTRVL…QTIVEHGLAD (167 aa)) are DNA-binding region. The SF3 helicase domain occupies 451-601 (IEFISFLSKL…FPFDRNGNAV (151 aa)). An ATP-binding site is contributed by 477–484 (GPPDTGKS). Lys558 is covalently cross-linked (Glycyl lysine isopeptide (Lys-Gly) (interchain with G-Cter in SUMO)).

Belongs to the papillomaviridae E1 protein family. As to quaternary structure, can form hexamers. Interacts with E2 protein; this interaction increases E1 DNA binding specificity. Interacts with host DNA polymerase subunit POLA2. Interacts with host single stranded DNA-binding protein RPA1. Interacts with host TOP1; this interaction stimulates the enzymatic activity of TOP1. Phosphorylated. Post-translationally, sumoylated.

Its subcellular location is the host nucleus. It carries out the reaction Couples ATP hydrolysis with the unwinding of duplex DNA by translocating in the 3'-5' direction.. The catalysed reaction is ATP + H2O = ADP + phosphate + H(+). ATP-dependent DNA 3'-5' helicase required for initiation of viral DNA replication. It forms a complex with the viral E2 protein. The E1-E2 complex binds to the replication origin which contains binding sites for both proteins. During the initial step, a dimer of E1 interacts with a dimer of protein E2 leading to a complex that binds the viral origin of replication with high specificity. Then, a second dimer of E1 displaces the E2 dimer in an ATP-dependent manner to form the E1 tetramer. Following this, two E1 monomers are added to each half of the site, which results in the formation of two E1 trimers on the viral ori. Subsequently, two hexamers will be created. The double hexamer acts as a bi-directional helicase machinery and unwinds the viral DNA and then recruits the host DNA polymerase to start replication. In Pan paniscus (Pygmy chimpanzee), this protein is Replication protein E1.